A 125-amino-acid polypeptide reads, in one-letter code: Small ribosomal subunit protein uS12 (125 aa).

Residues 9-31 form a disordered region; it reads RQGREVEKIKSKSPAMENSPQRR. 3-methylthioaspartic acid is present on aspartate 89.

It belongs to the universal ribosomal protein uS12 family. As to quaternary structure, part of the 30S ribosomal subunit. Contacts proteins S8 and S17. May interact with IF1 in the 30S initiation complex.

With S4 and S5 plays an important role in translational accuracy. Its function is as follows. Interacts with and stabilizes bases of the 16S rRNA that are involved in tRNA selection in the A site and with the mRNA backbone. Located at the interface of the 30S and 50S subunits, it traverses the body of the 30S subunit contacting proteins on the other side and probably holding the rRNA structure together. The combined cluster of proteins S8, S12 and S17 appears to hold together the shoulder and platform of the 30S subunit. The chain is Small ribosomal subunit protein uS12 from Verminephrobacter eiseniae (strain EF01-2).